The chain runs to 96 residues: Transcription and mRNA export factor SUS1 (96 aa).

Residue Lys68 forms a Glycyl lysine isopeptide (Lys-Gly) (interchain with G-Cter in ubiquitin) linkage.

It belongs to the ENY2 family. Component of the nuclear pore complex (NPC)-associated TREX-2 complex (transcription and export complex 2), composed of at least SUS1, SAC3, THP1, SEM1, and CDC31. TREX-2 contains 2 SUS1 chains. The TREX-2 complex interacts with the nucleoporin NUP1. Component of the 1.8 MDa SAGA transcription coactivator-HAT complex. SAGA is built of 5 distinct domains with specialized functions. Within the SAGA complex, SUS1, SGF11, SGF73 and UBP8 form an additional subcomplex of SAGA called the DUB module (deubiquitination module). Interacts directly with THP1, SAC3, SGF11, and with the RNA polymerase II.

Its subcellular location is the nucleus. It localises to the nucleoplasm. The protein resides in the cytoplasm. The protein localises to the P-body. Functionally, involved in mRNA export coupled transcription activation by association with both the TREX-2 and the SAGA complexes. At the promoters, SAGA is required for recruitment of the basal transcription machinery. It influences RNA polymerase II transcriptional activity through different activities such as TBP interaction and promoter selectivity, interaction with transcription activators, and chromatin modification through histone acetylation and deubiquitination. Within the SAGA complex, participates in a subcomplex required for deubiquitination of H2B and for the maintenance of steady-state H3 methylation levels. The TREX-2 complex functions in docking export-competent ribonucleoprotein particles (mRNPs) to the nuclear entrance of the nuclear pore complex (nuclear basket). TREX-2 participates in mRNA export and accurate chromatin positioning in the nucleus by tethering genes to the nuclear periphery. May also be involved in cytoplasmic mRNA decay by interaction with components of P-bodies. This Saccharomyces cerevisiae (strain RM11-1a) (Baker's yeast) protein is Transcription and mRNA export factor SUS1.